The following is a 373-amino-acid chain: Histidinol-phosphate aminotransferase (373 aa).

Lys-229 is subject to N6-(pyridoxal phosphate)lysine.

Belongs to the class-II pyridoxal-phosphate-dependent aminotransferase family. Histidinol-phosphate aminotransferase subfamily. Requires pyridoxal 5'-phosphate as cofactor.

It catalyses the reaction L-histidinol phosphate + 2-oxoglutarate = 3-(imidazol-4-yl)-2-oxopropyl phosphate + L-glutamate. It functions in the pathway amino-acid biosynthesis; L-histidine biosynthesis; L-histidine from 5-phospho-alpha-D-ribose 1-diphosphate: step 7/9. This is Histidinol-phosphate aminotransferase (hisC) from Methanothermobacter thermautotrophicus (strain ATCC 29096 / DSM 1053 / JCM 10044 / NBRC 100330 / Delta H) (Methanobacterium thermoautotrophicum).